A 442-amino-acid polypeptide reads, in one-letter code: tRNA-2-methylthio-N(6)-dimethylallyladenosine synthase (442 aa).

The MTTase N-terminal domain maps to 2–117; that stretch reads QGLYIKSYGC…LPELIIKARR (116 aa). Residues Cys-11, Cys-47, Cys-80, Cys-157, Cys-161, and Cys-164 each coordinate [4Fe-4S] cluster. The 232-residue stretch at 143–374 folds into the Radical SAM core domain; that stretch reads KNQEVSAFIS…QELLREQQLA (232 aa). Residues 377–442 form the TRAM domain; the sequence is RNMIGQTCSV…QNSVTGIVVN (66 aa).

The protein belongs to the methylthiotransferase family. MiaB subfamily. As to quaternary structure, monomer. [4Fe-4S] cluster is required as a cofactor.

Its subcellular location is the cytoplasm. The catalysed reaction is N(6)-dimethylallyladenosine(37) in tRNA + (sulfur carrier)-SH + AH2 + 2 S-adenosyl-L-methionine = 2-methylsulfanyl-N(6)-dimethylallyladenosine(37) in tRNA + (sulfur carrier)-H + 5'-deoxyadenosine + L-methionine + A + S-adenosyl-L-homocysteine + 2 H(+). Catalyzes the methylthiolation of N6-(dimethylallyl)adenosine (i(6)A), leading to the formation of 2-methylthio-N6-(dimethylallyl)adenosine (ms(2)i(6)A) at position 37 in tRNAs that read codons beginning with uridine. The polypeptide is tRNA-2-methylthio-N(6)-dimethylallyladenosine synthase (Ehrlichia chaffeensis (strain ATCC CRL-10679 / Arkansas)).